The sequence spans 398 residues: Probable sugar efflux transporter (398 aa).

12 consecutive transmembrane segments (helical) span residues 15-35, 50-70, 81-101, 103-123, 136-156, 169-189, 209-229, 246-266, 275-295, 301-321, 333-353, and 364-384; these read VVTL…PVGL, VGIM…PFML, LIGL…AWNF, VLVI…SITA, AQAL…GLPI, TFFA…KLLP, PALM…YTAY, FATV…VLFG, LLVS…MPAA, LAIL…GMQV, VAMS…ALVG, and AIGY…ILIF.

The protein belongs to the major facilitator superfamily. SotB (TC 2.A.1.2) family.

The protein localises to the cell inner membrane. Its function is as follows. Involved in the efflux of sugars. The physiological role may be the reduction of the intracellular concentration of toxic sugars or sugar metabolites. The sequence is that of Probable sugar efflux transporter from Enterobacter sp. (strain 638).